Consider the following 155-residue polypeptide: Small ribosomal subunit protein bS16 (155 aa).

The tract at residues 100–155 (EAGIPDPAPSTEEPAAVCEASAEMAGQPGEVEPAGAAAEPNSQEPEPEEEKPQVEA) is disordered. Positions 124 to 143 (AGQPGEVEPAGAAAEPNSQE) are enriched in low complexity.

The protein belongs to the bacterial ribosomal protein bS16 family.

This Synechococcus sp. (strain JA-3-3Ab) (Cyanobacteria bacterium Yellowstone A-Prime) protein is Small ribosomal subunit protein bS16.